Reading from the N-terminus, the 489-residue chain is Glycogen synthase (489 aa).

An ADP-alpha-D-glucose-binding site is contributed by Arg20.

This sequence belongs to the glycosyltransferase 1 family. Bacterial/plant glycogen synthase subfamily.

The enzyme catalyses [(1-&gt;4)-alpha-D-glucosyl](n) + ADP-alpha-D-glucose = [(1-&gt;4)-alpha-D-glucosyl](n+1) + ADP + H(+). It participates in glycan biosynthesis; glycogen biosynthesis. Its function is as follows. Synthesizes alpha-1,4-glucan chains using ADP-glucose. This chain is Glycogen synthase, found in Chlorobium chlorochromatii (strain CaD3).